We begin with the raw amino-acid sequence, 544 residues long: Involucrin (544 aa).

The tract at residues 1 to 520 (MSQQHTLPVT…GQVQGIQQAL (520 aa)) is disordered. Residues 76-90 (EQQQQPQEQKLQQQH) are compositionally biased toward low complexity. Composition is skewed to basic and acidic residues over residues 96–117 (EHQKAENPEQQLKQEKAQREKQ), 124–152 (EEEKKLLDQQPDHELAKSDEQLGTKKEQL), 202–234 (QLKHLEQQEGQLKHLEQQEGQVKHLEQQEKQSE), 252–271 (QLKHLEEQKGQLKHLEHQEG), 283–297 (KHLEQLEKQLEHPEQ), 304–347 (QLEE…HPEQ), 354–411 (QLEE…REEQ), 423–437 (KHLEQEEKQLEHPEQ), and 462–476 (KHLEQQEKQLEHPEQ). Residues 477 to 494 (QEGQLKPQEQQEGQLKGL) are compositionally biased toward low complexity.

The protein belongs to the involucrin family. In terms of assembly, directly or indirectly cross-linked to cornifelin (CNFN). Substrate of transglutaminase. Specific glutamines or lysines are cross-linked to keratins, desmoplakin and to inter involucrin molecules. As to expression, keratinocytes of epidermis and other stratified squamous epithelia.

It is found in the cytoplasm. Its function is as follows. Part of the insoluble cornified cell envelope (CE) of stratified squamous epithelia. This chain is Involucrin (IVL), found in Aotus trivirgatus (Three-striped night monkey).